The following is a 289-amino-acid chain: Glucosamine-6-phosphate deaminase 1 (289 aa).

Residue aspartate 72 is the Proton acceptor; for enolization step of the active site. Aspartate 141 functions as the For ring-opening step in the catalytic mechanism. Histidine 143 acts as the Proton acceptor; for ring-opening step in catalysis. The active-site For ring-opening step is glutamate 148. Threonine 161 is subject to Phosphothreonine.

The protein belongs to the glucosamine/galactosamine-6-phosphate isomerase family. As to quaternary structure, homohexamer. In terms of tissue distribution, widely expressed. Detected in brain, liver, kidney, muscle, ovary, testis, spermatids and spermatozoa. In spermatids, located close to the developing acrosome vesicle. In spermatozoa, found close to the acrosomal region.

The protein localises to the cytoplasm. The enzyme catalyses alpha-D-glucosamine 6-phosphate + H2O = beta-D-fructose 6-phosphate + NH4(+). The protein operates within nucleotide-sugar biosynthesis; UDP-N-acetyl-alpha-D-glucosamine biosynthesis; alpha-D-glucosamine 6-phosphate from D-fructose 6-phosphate: step 1/1. With respect to regulation, allosterically activated by N-acetylglucosamine-6-phosphate (GlcNAc6P). Catalyzes the reversible conversion of alpha-D-glucosamine 6-phosphate (GlcN-6P) into beta-D-fructose 6-phosphate (Fru-6P) and ammonium ion, a regulatory reaction step in de novo uridine diphosphate-N-acetyl-alpha-D-glucosamine (UDP-GlcNAc) biosynthesis via hexosamine pathway. Deamination is coupled to aldo-keto isomerization mediating the metabolic flux from UDP-GlcNAc toward Fru-6P. At high ammonium level can drive amination and isomerization of Fru-6P toward hexosamines and UDP-GlcNAc synthesis. Has a role in fine tuning the metabolic fluctuations of cytosolic UDP-GlcNAc and their effects on hyaluronan synthesis that occur during tissue remodeling. Seems to trigger calcium oscillations in mammalian eggs. These oscillations serve as the essential trigger for egg activation and early development of the embryo. The polypeptide is Glucosamine-6-phosphate deaminase 1 (Mus musculus (Mouse)).